Consider the following 213-residue polypeptide: ATP-dependent Clp protease proteolytic subunit 1 (213 aa).

Ser108 acts as the Nucleophile in catalysis. Residue His133 is part of the active site.

The protein belongs to the peptidase S14 family. In terms of assembly, fourteen ClpP subunits assemble into 2 heptameric rings which stack back to back to give a disk-like structure with a central cavity, resembling the structure of eukaryotic proteasomes.

Its subcellular location is the cytoplasm. It catalyses the reaction Hydrolysis of proteins to small peptides in the presence of ATP and magnesium. alpha-casein is the usual test substrate. In the absence of ATP, only oligopeptides shorter than five residues are hydrolyzed (such as succinyl-Leu-Tyr-|-NHMec, and Leu-Tyr-Leu-|-Tyr-Trp, in which cleavage of the -Tyr-|-Leu- and -Tyr-|-Trp bonds also occurs).. Its function is as follows. Cleaves peptides in various proteins in a process that requires ATP hydrolysis. Has a chymotrypsin-like activity. Plays a major role in the degradation of misfolded proteins. The sequence is that of ATP-dependent Clp protease proteolytic subunit 1 from Frankia casuarinae (strain DSM 45818 / CECT 9043 / HFP020203 / CcI3).